A 199-amino-acid chain; its full sequence is Ras-related and estrogen-regulated growth inhibitor (199 aa).

Residues 13–20 (GRAGVGKS), 60–64 (DTAGQ), and 118–121 (NKAD) each bind GTP.

Belongs to the small GTPase superfamily. Ras family. Detected in heart, brain, placenta, lung, liver, skin, kidney and pancreas. Detected in estrogen receptor-positive breast-derived cell lines, but not in estrogen receptor-negative cell lines. Expression is decreased or lost in a significant proportion of primary breast tumors with poor clinical prognosis.

Its subcellular location is the cytoplasm. The enzyme catalyses GTP + H2O = GDP + phosphate + H(+). Functionally, binds GDP/GTP and possesses intrinsic GTPase activity. Has higher affinity for GDP than for GTP. In cell lines overexpression leads to a reduction in the rate of proliferation, colony formation and in tumorigenic potential. The polypeptide is Ras-related and estrogen-regulated growth inhibitor (RERG) (Homo sapiens (Human)).